A 217-amino-acid polypeptide reads, in one-letter code: 3,4-dihydroxy-2-butanone 4-phosphate synthase (217 aa).

Residues 37–38 (RE), Asp42, 150–154 (RGGHT), and Glu174 each bind D-ribulose 5-phosphate. Glu38 contacts Mg(2+). His153 serves as a coordination point for Mg(2+).

It belongs to the DHBP synthase family. In terms of assembly, homodimer. Mg(2+) serves as cofactor. Mn(2+) is required as a cofactor.

The enzyme catalyses D-ribulose 5-phosphate = (2S)-2-hydroxy-3-oxobutyl phosphate + formate + H(+). The protein operates within cofactor biosynthesis; riboflavin biosynthesis; 2-hydroxy-3-oxobutyl phosphate from D-ribulose 5-phosphate: step 1/1. Catalyzes the conversion of D-ribulose 5-phosphate to formate and 3,4-dihydroxy-2-butanone 4-phosphate. The chain is 3,4-dihydroxy-2-butanone 4-phosphate synthase from Escherichia fergusonii (strain ATCC 35469 / DSM 13698 / CCUG 18766 / IAM 14443 / JCM 21226 / LMG 7866 / NBRC 102419 / NCTC 12128 / CDC 0568-73).